The sequence spans 83 residues: Cytochrome b559 subunit alpha (83 aa).

Residues valine 21 to tryptophan 35 form a helical membrane-spanning segment. Histidine 23 provides a ligand contact to heme.

The protein belongs to the PsbE/PsbF family. As to quaternary structure, heterodimer of an alpha subunit and a beta subunit. PSII is composed of 1 copy each of membrane proteins PsbA, PsbB, PsbC, PsbD, PsbE, PsbF, PsbH, PsbI, PsbJ, PsbK, PsbL, PsbM, PsbT, PsbX, PsbY, PsbZ, Psb30/Ycf12, at least 3 peripheral proteins of the oxygen-evolving complex and a large number of cofactors. It forms dimeric complexes. The cofactor is heme b.

It is found in the plastid. Its subcellular location is the chloroplast thylakoid membrane. Its function is as follows. This b-type cytochrome is tightly associated with the reaction center of photosystem II (PSII). PSII is a light-driven water:plastoquinone oxidoreductase that uses light energy to abstract electrons from H(2)O, generating O(2) and a proton gradient subsequently used for ATP formation. It consists of a core antenna complex that captures photons, and an electron transfer chain that converts photonic excitation into a charge separation. This chain is Cytochrome b559 subunit alpha, found in Marchantia polymorpha (Common liverwort).